Here is a 323-residue protein sequence, read N- to C-terminus: tRNA-modifying protein YgfZ (323 aa).

Folate is bound by residues Trp29 and Trp182.

Belongs to the tRNA-modifying YgfZ family.

The protein resides in the cytoplasm. Functionally, folate-binding protein involved in regulating the level of ATP-DnaA and in the modification of some tRNAs. It is probably a key factor in regulatory networks that act via tRNA modification, such as initiation of chromosomal replication. The chain is tRNA-modifying protein YgfZ from Vibrio cholerae serotype O1 (strain ATCC 39541 / Classical Ogawa 395 / O395).